The sequence spans 345 residues: Trans-enoyl reductase tndF (345 aa).

The interval 1–26 is disordered; sequence MAREHQAAILPQPGGPLSVGMRPTPK. NADP(+) is bound by residues 44–49, 168–171, 191–194, Tyr-209, and 244–245; these read CDYYQR, SSSV, SPEH, and LD.

The protein belongs to the zinc-containing alcohol dehydrogenase family.

The protein operates within secondary metabolite biosynthesis; terpenoid biosynthesis. Trans-enoyl reductase; part of the gene cluster that mediates the biosynthesis of talaronoid C, a fusicoccane diterpenoid with an unprecedented tricyclic 5/8/6 ring system. The first step in the pathway is performed by the fusicoccadiene synthase tndC that possesses both prenyl transferase and terpene cyclase activity, converting isopentenyl diphosphate and dimethylallyl diphosphate into geranylgeranyl diphosphate (GGDP) and further converting GGDP into talarodiene, a precursor for talaronoid C. The remaining enzymes from the cluster include the cytochrome P450 monooxygenase tndB, the aldehyde reductase tndE and the alcohol dehydrogenase tndF that are involved in the conversion of talarodiene into talaronoid C. This is Trans-enoyl reductase tndF from Aspergillus flavipes.